A 119-amino-acid polypeptide reads, in one-letter code: Protein yippee-like 3 (119 aa).

A Yippee domain is found at 19 to 116 (RRYSCAHCRA…IELNHMIKDN (98 aa)). Positions 23, 26, 79, and 82 each coordinate Zn(2+).

Belongs to the yippee family. In terms of processing, probably ubiquitinated leading to its degradation by the proteasome.

The protein localises to the nucleus. It is found in the nucleolus. In terms of biological role, involved in proliferation and apoptosis in myeloid precursor cells. The chain is Protein yippee-like 3 (YPEL3) from Bos taurus (Bovine).